The primary structure comprises 209 residues: Large ribosomal subunit protein uL3 (209 aa).

The interval 128–154 (QQRGPMTHGSKFHRAPGSMGASSDPSR) is disordered.

The protein belongs to the universal ribosomal protein uL3 family. In terms of assembly, part of the 50S ribosomal subunit. Forms a cluster with proteins L14 and L19.

Functionally, one of the primary rRNA binding proteins, it binds directly near the 3'-end of the 23S rRNA, where it nucleates assembly of the 50S subunit. This chain is Large ribosomal subunit protein uL3, found in Clostridium beijerinckii (strain ATCC 51743 / NCIMB 8052) (Clostridium acetobutylicum).